The primary structure comprises 367 residues: Phospho-N-acetylmuramoyl-pentapeptide-transferase (367 aa).

Helical transmembrane passes span 16–36, 62–82, 87–107, 125–145, 158–178, 190–210, 214–234, 240–260, 264–284, and 326–346; these read LLLA…WVRF, TMGG…FNLV, MLLP…DDWL, FWIM…PQPY, VGEV…IVFI, SLAG…TFLA, LTNL…FLWY, QVFM…VVAL, QWLL…STMI, and FVLI…IFGP.

Belongs to the glycosyltransferase 4 family. MraY subfamily. Mg(2+) is required as a cofactor.

Its subcellular location is the cell membrane. It carries out the reaction UDP-N-acetyl-alpha-D-muramoyl-L-alanyl-gamma-D-glutamyl-meso-2,6-diaminopimeloyl-D-alanyl-D-alanine + di-trans,octa-cis-undecaprenyl phosphate = di-trans,octa-cis-undecaprenyl diphospho-N-acetyl-alpha-D-muramoyl-L-alanyl-D-glutamyl-meso-2,6-diaminopimeloyl-D-alanyl-D-alanine + UMP. It participates in cell wall biogenesis; peptidoglycan biosynthesis. Catalyzes the initial step of the lipid cycle reactions in the biosynthesis of the cell wall peptidoglycan: transfers peptidoglycan precursor phospho-MurNAc-pentapeptide from UDP-MurNAc-pentapeptide onto the lipid carrier undecaprenyl phosphate, yielding undecaprenyl-pyrophosphoryl-MurNAc-pentapeptide, known as lipid I. This Chloroflexus aurantiacus (strain ATCC 29366 / DSM 635 / J-10-fl) protein is Phospho-N-acetylmuramoyl-pentapeptide-transferase.